Consider the following 457-residue polypeptide: Argininosuccinate lyase (457 aa).

It belongs to the lyase 1 family. Argininosuccinate lyase subfamily.

The protein localises to the cytoplasm. It carries out the reaction 2-(N(omega)-L-arginino)succinate = fumarate + L-arginine. The protein operates within amino-acid biosynthesis; L-arginine biosynthesis; L-arginine from L-ornithine and carbamoyl phosphate: step 3/3. This chain is Argininosuccinate lyase, found in Pectobacterium atrosepticum (strain SCRI 1043 / ATCC BAA-672) (Erwinia carotovora subsp. atroseptica).